Here is a 671-residue protein sequence, read N- to C-terminus: Vinexin (671 aa).

Residue Q2 is modified to N-acetylalanine. Residue R6 is modified to Phosphoserine. Disordered regions lie at residues 46 to 111 (LNFQ…TKDS), 166 to 215 (TFEE…RPGA), 249 to 268 (LETG…EKPS), 295 to 324 (TRLP…AWSS), and 337 to 383 (SLSP…KKRK). Over residues 88–108 (PSASTKIPASQHTQNWSATWT) the composition is skewed to polar residues. Positions 115–187 (DKRWVKYEGI…GAQQRPAHRP (73 aa)) constitute a SoHo domain. S348 is subject to Phosphoserine. A compositionally biased stretch (polar residues) spans 359 to 368 (PSSTRDPSAS). SH3 domains lie at 380–439 (KKRK…VLPA) and 454–515 (LEYG…VSRE). Residues 380 to 515 (KKRKAARLKF…PASYVQVSRE (136 aa)) form a binds to vinculin region. At S395 the chain carries Phosphoserine. The disordered stretch occupies residues 519 to 611 (RLCDDGPQLP…LGTSSPNTSQ (93 aa)). A Phosphoserine; by MAPK1 modification is found at S530. Residues 535–553 (AAARSARHPSSPSALRSPA) show a composition bias toward low complexity. A phosphoserine mark is found at S544, S545, S547, S551, and S563. Positions 560–584 (GQTSPRRTGFSFPTQEPRPQTQNLG) are enriched in polar residues. Residues 612–671 (IHWTPYRAMYQYRPQNEDELELREGDRVDVMQQCDDGWFVGVSRRTQKFGTFPGNYVAPV) form the SH3 3 domain. The segment at 612 to 671 (IHWTPYRAMYQYRPQNEDELELREGDRVDVMQQCDDGWFVGVSRRTQKFGTFPGNYVAPV) is binds to SOS.

Interacts with DLG5 through its third SH3 domain. Interacts with vinculin by the first two SH3 domains and the proline rich region of vinculin. Binds to SOS (guanine nucleotide exchange factor of RAS and RAC), through its third SH3 domain. The formation of this complex is down-regulated by phosphorylation of SOS. Interacts with INPPL1/SHIP2, SAFB2, SOCS7 and SRCIN1. Interacts with FASLG. Interacts with MAPK1/ERK2. Phosphorylated at Ser-530 by MAPK1/ERK2 during cell spreading. In terms of tissue distribution, both isoforms are expressed in different tissues like heart, placenta, brain, skeletal muscle and pancreas. Isoform beta is especially found in liver.

Its subcellular location is the cell junction. The protein resides in the cytoplasm. It is found in the cytoskeleton. The protein localises to the nucleus. Vinexin alpha isoform promotes up-regulation of actin stress fiber formation. Vinexin beta isoform plays a role in cell spreading and enhances the activation of JNK/SAPK in response to EGF stimulation by using its third SH3 domain. The polypeptide is Vinexin (SORBS3) (Homo sapiens (Human)).